The sequence spans 341 residues: Uroporphyrinogen decarboxylase (341 aa).

Substrate is bound by residues 25–29 (RQAGR), F44, D74, Y151, S206, and H318.

Belongs to the uroporphyrinogen decarboxylase family. In terms of assembly, homodimer.

The protein localises to the cytoplasm. It catalyses the reaction uroporphyrinogen III + 4 H(+) = coproporphyrinogen III + 4 CO2. The protein operates within porphyrin-containing compound metabolism; protoporphyrin-IX biosynthesis; coproporphyrinogen-III from 5-aminolevulinate: step 4/4. In terms of biological role, catalyzes the decarboxylation of four acetate groups of uroporphyrinogen-III to yield coproporphyrinogen-III. The protein is Uroporphyrinogen decarboxylase of Flavobacterium johnsoniae (strain ATCC 17061 / DSM 2064 / JCM 8514 / BCRC 14874 / CCUG 350202 / NBRC 14942 / NCIMB 11054 / UW101) (Cytophaga johnsonae).